The chain runs to 134 residues: Thioredoxin-like protein Clot (134 aa).

Positions 1–134 (MTLKKVDANP…LILPLLAPST (134 aa)) constitute a Thioredoxin domain. Catalysis depends on nucleophile residues cysteine 48 and cysteine 51. Cysteine 48 and cysteine 51 are disulfide-bonded.

This sequence belongs to the thioredoxin family.

Functionally, probable thiol-disulfide oxidoreductase that may participate in various redox reactions. The polypeptide is Thioredoxin-like protein Clot (Arabidopsis thaliana (Mouse-ear cress)).